The sequence spans 360 residues: tRNA-specific 2-thiouridylase MnmA (360 aa).

ATP is bound by residues 8 to 15 (GMSGGVDS) and Met-34. The interval 94 to 96 (NPD) is interaction with target base in tRNA. The Nucleophile role is filled by Cys-99. An intrachain disulfide couples Cys-99 to Cys-195. Gly-123 serves as a coordination point for ATP. The interaction with tRNA stretch occupies residues 145–147 (KDQ). Cys-195 (cysteine persulfide intermediate) is an active-site residue. The tract at residues 307 to 308 (RY) is interaction with tRNA.

Belongs to the MnmA/TRMU family.

The protein resides in the cytoplasm. The enzyme catalyses S-sulfanyl-L-cysteinyl-[protein] + uridine(34) in tRNA + AH2 + ATP = 2-thiouridine(34) in tRNA + L-cysteinyl-[protein] + A + AMP + diphosphate + H(+). Its function is as follows. Catalyzes the 2-thiolation of uridine at the wobble position (U34) of tRNA, leading to the formation of s(2)U34. This is tRNA-specific 2-thiouridylase MnmA from Methylobacillus flagellatus (strain ATCC 51484 / DSM 6875 / VKM B-1610 / KT).